A 491-amino-acid polypeptide reads, in one-letter code: Subtilase-type proteinase RRT12 (491 aa).

The signal sequence occupies residues 1–17; sequence MKPQCILISLLVNLAYA. Asparagine 38, asparagine 64, asparagine 106, and asparagine 121 each carry an N-linked (GlcNAc...) asparagine glycan. Residues 142-442 form the Peptidase S8 domain; sequence PFDVGDKDRY…FPRLNIEAIA (301 aa). Active-site charge relay system residues include aspartate 174 and histidine 205. Residues asparagine 268 and asparagine 356 are each glycosylated (N-linked (GlcNAc...) asparagine). Catalysis depends on serine 365, which acts as the Charge relay system. Asparagine 449 carries an N-linked (GlcNAc...) asparagine glycan.

Belongs to the peptidase S8 family. N-glycosylated.

It localises to the spore wall. In terms of biological role, subtilisin-related protease involved in the formation of a protective dityrosine layer required for spore wall assembly. Identified in a screen for mutants with increased levels of rDNA transcription. This chain is Subtilase-type proteinase RRT12 (RRT12), found in Saccharomyces cerevisiae (strain ATCC 204508 / S288c) (Baker's yeast).